The sequence spans 541 residues: MATPVALLSESVLGWSIFTVVLLVILAFCWVYIRKYQSRQESEVISTITAICALAIALITSALLPVDIFLVSFMKHPNGTYKEWAANNETRVQIEDTVLYGYYTLYSIILFCVFLWIPFVYFYYEEKDEDNNNKCLQVKNALKYTIGFVIVCSALLLIGTFVPLASPPNQNSTQWQKVQYLFEELGSSHGLAALSFSISSLTLIGMLAVITYTAYGMSVLPLNLIKGTRSVLYERLENTEDTEEVERQIDKLKAKCADGRPLSMRDRRNLQDLEDKLQLLHRRGRHLEIAERNCCNKVGSALRPMKILLGVFFILVALLFFVTLFISNLDKALHSAGISTGFIIFGTNLTNPLNELLLALQPVFPLDYVLITVITMYFVFTSMAGIRNMGIWFFWIRLYKIRPQRTRPQALLFLCMILLLIVLHTSYMIYSLAPQYVMYGSQKYLLQTPLPTAVPSQSNRSATITKICDADAPEDQCTVTRSYLFLHKFWFFSTIYYFGNWAFLGVFLIGLVVSCCKGKKSVIEGEVDADDSDFSDDEYVH.

Topologically, residues 1–11 (MATPVALLSES) are extracellular. A helical membrane pass occupies residues 12–31 (VLGWSIFTVVLLVILAFCWV). Residues 32–50 (YIRKYQSRQESEVISTITA) lie on the Cytoplasmic side of the membrane. The chain crosses the membrane as a helical span at residues 51-71 (ICALAIALITSALLPVDIFLV). Over 72–101 (SFMKHPNGTYKEWAANNETRVQIEDTVLYG) the chain is Extracellular. N-linked (GlcNAc...) asparagine glycans are attached at residues N78 and N88. Residues 102–122 (YYTLYSIILFCVFLWIPFVYF) form a helical membrane-spanning segment. Over 123 to 145 (YYEEKDEDNNNKCLQVKNALKYT) the chain is Cytoplasmic. A helical transmembrane segment spans residues 146–166 (IGFVIVCSALLLIGTFVPLAS). The Extracellular portion of the chain corresponds to 167–189 (PPNQNSTQWQKVQYLFEELGSSH). N-linked (GlcNAc...) asparagine glycosylation is present at N171. Residues 190–210 (GLAALSFSISSLTLIGMLAVI) traverse the membrane as a helical segment. Residues 211–306 (TYTAYGMSVL…KVGSALRPMK (96 aa)) lie on the Cytoplasmic side of the membrane. The chain crosses the membrane as a helical span at residues 307–327 (ILLGVFFILVALLFFVTLFIS). Residues 328-365 (NLDKALHSAGISTGFIIFGTNLTNPLNELLLALQPVFP) lie on the Extracellular side of the membrane. Residue N348 is glycosylated (N-linked (GlcNAc...) asparagine). The chain crosses the membrane as a helical span at residues 366 to 386 (LDYVLITVITMYFVFTSMAGI). The Cytoplasmic portion of the chain corresponds to 387–409 (RNMGIWFFWIRLYKIRPQRTRPQ). Residues 410-430 (ALLFLCMILLLIVLHTSYMIY) form a helical membrane-spanning segment. Over 431–488 (SLAPQYVMYGSQKYLLQTPLPTAVPSQSNRSATITKICDADAPEDQCTVTRSYLFLHK) the chain is Extracellular. N459 carries N-linked (GlcNAc...) asparagine glycosylation. The chain crosses the membrane as a helical span at residues 489-509 (FWFFSTIYYFGNWAFLGVFLI). Residues 510–541 (GLVVSCCKGKKSVIEGEVDADDSDFSDDEYVH) are Cytoplasmic-facing.

The protein belongs to the LIMR family. LMBRD1 subfamily.

The protein localises to the endoplasmic reticulum membrane. The protein resides in the lysosome membrane. Its subcellular location is the cell membrane. Lysosomal membrane chaperone required to export cobalamin (vitamin B12) from the lysosome to the cytosol, allowing its conversion to cofactors. Targets ABCD4 transporter from the endoplasmic reticulum to the lysosome. Then forms a complex with lysosomal ABCD4 and cytoplasmic MMACHC to transport cobalamin across the lysosomal membrane. May play a role in mediating and regulating the internalization of the insulin receptor. This chain is Lysosomal cobalamin transport escort protein LMBD1 (lmbrd1), found in Danio rerio (Zebrafish).